The primary structure comprises 814 residues: G-type lectin S-receptor-like serine/threonine-protein kinase At1g61370 (814 aa).

The first 25 residues, 1-25, serve as a signal peptide directing secretion; sequence MGKIGIVFFASLLFLLIIFPSCAFA. The Bulb-type lectin domain maps to 26-145; the sequence is AITRASPLSI…VSERNLWESF (120 aa). Residues 26-433 lie on the Extracellular side of the membrane; sequence AITRASPLSI…SELAGSNRVK (408 aa). 6 N-linked (GlcNAc...) asparagine glycosylation sites follow: asparagine 43, asparagine 54, asparagine 89, asparagine 95, asparagine 253, and asparagine 271. Positions 282 to 318 constitute an EGF-like domain; the sequence is PVSSCDVYNTCGPFGLCIRSNPPKCECLKGFVPKSDE. 2 cysteine pairs are disulfide-bonded: cysteine 286-cysteine 298 and cysteine 292-cysteine 306. N-linked (GlcNAc...) asparagine glycosylation is found at asparagine 324, asparagine 334, asparagine 340, and asparagine 383. The PAN domain occupies 337–423; that stretch reads CDVNSSATAQ…GETLSIRLAS (87 aa). 2 disulfide bridges follow: cysteine 376–cysteine 397 and cysteine 380–cysteine 386. A helical membrane pass occupies residues 434–454; that stretch reads IIVASIVSISVFMILVFASYW. The Cytoplasmic portion of the chain corresponds to 455 to 814; it reads YWRYKAKQND…NITQTAIVGR (360 aa). The 286-residue stretch at 501-786 folds into the Protein kinase domain; the sequence is FSMENKLGQG…DLPKPKQPVF (286 aa). Residues 507–515 and lysine 529 each bind ATP; that span reads LGQGGFGPV. Residues serine 535 and serine 550 each carry the phosphoserine modification. The tract at residues 590–607 is caM-binding; that stretch reads TKKLELDWPKRFEIIQGI. Catalysis depends on aspartate 626, which acts as the Proton acceptor. Serine 630 and serine 643 each carry phosphoserine. Threonine 660 is subject to Phosphothreonine. Residues serine 703, serine 704, serine 797, and serine 802 each carry the phosphoserine modification. Threonine 809 carries the post-translational modification Phosphothreonine.

The protein belongs to the protein kinase superfamily. Ser/Thr protein kinase family.

It is found in the cell membrane. It carries out the reaction L-seryl-[protein] + ATP = O-phospho-L-seryl-[protein] + ADP + H(+). It catalyses the reaction L-threonyl-[protein] + ATP = O-phospho-L-threonyl-[protein] + ADP + H(+). In Arabidopsis thaliana (Mouse-ear cress), this protein is G-type lectin S-receptor-like serine/threonine-protein kinase At1g61370.